The primary structure comprises 120 residues: MARIAGVNIPNHKHAEIALTAIYGIGRSRAQKICDAANVVRSVKMKDLTESDMERLRDEVAKFIVEGDLRRETTMNIKRLMDLGCYRGVRHRRGLPLRGQRTRTNARTRKGPRKAIAGKK.

The disordered stretch occupies residues 94–120 (GLPLRGQRTRTNARTRKGPRKAIAGKK).

The protein belongs to the universal ribosomal protein uS13 family. As to quaternary structure, part of the 30S ribosomal subunit. Forms a loose heterodimer with protein S19. Forms two bridges to the 50S subunit in the 70S ribosome.

Located at the top of the head of the 30S subunit, it contacts several helices of the 16S rRNA. In the 70S ribosome it contacts the 23S rRNA (bridge B1a) and protein L5 of the 50S subunit (bridge B1b), connecting the 2 subunits; these bridges are implicated in subunit movement. Contacts the tRNAs in the A and P-sites. The chain is Small ribosomal subunit protein uS13 from Aromatoleum aromaticum (strain DSM 19018 / LMG 30748 / EbN1) (Azoarcus sp. (strain EbN1)).